Reading from the N-terminus, the 37-residue chain is Unknown protein 25 (37 aa).

In Pseudotsuga menziesii (Douglas-fir), this protein is Unknown protein 25.